Here is a 452-residue protein sequence, read N- to C-terminus: L-seryl-tRNA(Sec) selenium transferase (452 aa).

The residue at position 285 (Lys285) is an N6-(pyridoxal phosphate)lysine.

This sequence belongs to the SelA family. It depends on pyridoxal 5'-phosphate as a cofactor.

It is found in the cytoplasm. It carries out the reaction L-seryl-tRNA(Sec) + selenophosphate + H(+) = L-selenocysteinyl-tRNA(Sec) + phosphate. Its pathway is aminoacyl-tRNA biosynthesis; selenocysteinyl-tRNA(Sec) biosynthesis; selenocysteinyl-tRNA(Sec) from L-seryl-tRNA(Sec) (bacterial route): step 1/1. Functionally, converts seryl-tRNA(Sec) to selenocysteinyl-tRNA(Sec) required for selenoprotein biosynthesis. The protein is L-seryl-tRNA(Sec) selenium transferase of Aquifex aeolicus (strain VF5).